The sequence spans 409 residues: Probable tRNA pseudouridine synthase D (409 aa).

Aspartate 73 functions as the Nucleophile in the catalytic mechanism. The region spanning 146–365 (GFPNFFGDQR…SSGDRRIISA (220 aa)) is the TRUD domain.

Belongs to the pseudouridine synthase TruD family.

The enzyme catalyses uridine(13) in tRNA = pseudouridine(13) in tRNA. Could be responsible for synthesis of pseudouridine from uracil-13 in transfer RNAs. The sequence is that of Probable tRNA pseudouridine synthase D from Thermoplasma volcanium (strain ATCC 51530 / DSM 4299 / JCM 9571 / NBRC 15438 / GSS1).